The following is a 246-amino-acid chain: Virulence plasmid protein pGP6-D (246 aa).

It belongs to the UPF0137 (pGP6-D) family.

In Chlamydia psittaci (Chlamydophila psittaci), this protein is Virulence plasmid protein pGP6-D.